A 391-amino-acid chain; its full sequence is Uroporphyrinogen decarboxylase, chloroplastic (391 aa).

Substrate is bound by residues 71-75 (RQAGR), F90, S120, D121, Y198, S253, and H368.

Belongs to the uroporphyrinogen decarboxylase family. As to quaternary structure, homodimer.

The protein localises to the plastid. Its subcellular location is the chloroplast. It catalyses the reaction uroporphyrinogen III + 4 H(+) = coproporphyrinogen III + 4 CO2. Its pathway is porphyrin-containing compound metabolism; protoporphyrin-IX biosynthesis; coproporphyrinogen-III from 5-aminolevulinate: step 4/4. Functionally, catalyzes the decarboxylation of four acetate groups of uroporphyrinogen-III to yield coproporphyrinogen-III. The protein is Uroporphyrinogen decarboxylase, chloroplastic (DCUP) of Nicotiana tabacum (Common tobacco).